A 166-amino-acid chain; its full sequence is NADH-quinone oxidoreductase subunit E (166 aa).

The [2Fe-2S] cluster site is built by cysteine 92, cysteine 97, cysteine 133, and cysteine 137.

The protein belongs to the complex I 24 kDa subunit family. As to quaternary structure, composed of 13 different subunits. Subunits NuoCD, E, F, and G constitute the peripheral sector of the complex. [2Fe-2S] cluster is required as a cofactor.

It catalyses the reaction a quinone + NADH + 5 H(+)(in) = a quinol + NAD(+) + 4 H(+)(out). In terms of biological role, NDH-1 shuttles electrons from NADH, via FMN and iron-sulfur (Fe-S) centers, to quinones in the respiratory chain. The immediate electron acceptor for the enzyme in this species is believed to be ubiquinone. Couples the redox reaction to proton translocation (for every two electrons transferred, four hydrogen ions are translocated across the cytoplasmic membrane), and thus conserves the redox energy in a proton gradient. The chain is NADH-quinone oxidoreductase subunit E (nuoE) from Salmonella typhi.